A 190-amino-acid polypeptide reads, in one-letter code: GATA transcription factor 17 (190 aa).

Residues 1–14 are compositionally biased toward basic and acidic residues; the sequence is MSEGSEDTKTKLDS. Disordered regions lie at residues 1–42 and 77–101; these read MSEG…DTKR and RQAA…NDLN. The segment at 38–92 adopts a GATA-type zinc-finger fold; sequence GDTKRTCVDCGTIRTPLWRGGPAGPKSLCNACGIKSRKKRQAALGMRSEEKKKNR.

Belongs to the type IV zinc-finger family. Class B subfamily.

It localises to the nucleus. Functionally, transcriptional regulator that specifically binds 5'-GATA-3' or 5'-GAT-3' motifs within gene promoters. This Arabidopsis thaliana (Mouse-ear cress) protein is GATA transcription factor 17 (GATA17).